Reading from the N-terminus, the 464-residue chain is Olfactomedin (464 aa).

The signal sequence occupies residues 1–16; that stretch reads MYICLLTLVLIHAAAA. Asparagine 21, asparagine 85, asparagine 143, asparagine 228, asparagine 279, and asparagine 383 each carry an N-linked (GlcNAc...) asparagine glycan. The Olfactomedin-like domain occupies 192-464; the sequence is SCQHQGLAHI…LLHYDIALKP (273 aa). An intrachain disulfide couples cysteine 193 to cysteine 394.

Oligomer; disulfide-linked. Most, if not all, of the six potential sites for N-glycosylation carry carbohydrate moieties of 8-10 sugar residues. In terms of tissue distribution, expressed exclusively in olfactory neuroepithelium.

It is found in the secreted. It localises to the extracellular space. In terms of biological role, may influence the maintenance, growth, or differentiation of chemosensory cilia on the apical dendrites of olfactory neurons. Major component of the extracellular matrix of the olfactory neuroepithelium. This Aquarana catesbeiana (American bullfrog) protein is Olfactomedin.